The sequence spans 221 residues: Cutinase 3 (221 aa).

Positions 1 to 17 (MRFHTILLAALASLVIA) are cleaved as a signal peptide. 2 cysteine pairs are disulfide-bonded: C44-C122 and C70-C84. The Nucleophile role is filled by S133. C184 and C191 form a disulfide bridge. The active site involves D188. H201 functions as the Proton donor/acceptor in the catalytic mechanism.

It belongs to the cutinase family.

The protein localises to the secreted. The enzyme catalyses cutin + H2O = cutin monomers.. Functionally, catalyzes the hydrolysis of complex carboxylic polyesters found in the cell wall of plants. Degrades cutin, a macromolecule that forms the structure of the plant cuticle. Also degrades suberin, a specialized macromolecule found in the cell wall of various plant tissues. This is Cutinase 3 from Emericella nidulans (strain FGSC A4 / ATCC 38163 / CBS 112.46 / NRRL 194 / M139) (Aspergillus nidulans).